The sequence spans 71 residues: MQKLIILLLVAAVLMSTQALFQEKRPMKKINFLSKGKTDAEKQRKRSCSDDWQYCEYPHDCCSWSCDVVCS.

The signal sequence occupies residues Met1–Ala19. A propeptide spanning residues Leu20 to Gln43 is cleaved from the precursor. 3 cysteine pairs are disulfide-bonded: Cys48–Cys62, Cys55–Cys66, and Cys61–Cys70.

It belongs to the conotoxin O2 superfamily. Expressed by the venom duct.

The protein localises to the secreted. Inhibits voltage-gated ion channels. The chain is Conotoxin Vc6.12 from Conus victoriae (Queen Victoria cone).